The sequence spans 520 residues: Glucose starvation modulator protein 1 (520 aa).

The zn(2)-C6 fungal-type DNA-binding region spans 20–48; the sequence is CSFCHSKHLQCSNNRPCKNCVKRNIADQC. Disordered stretches follow at residues 63–104 and 194–213; these read AKNK…SSGR and PASPTPSSTSEYQTIPPNEM. Residues 74–85 are compositionally biased toward low complexity; sequence SLESSSSPFSPL. Positions 90 to 104 are enriched in polar residues; sequence INSQSSQPLDPSSGR. The PAS domain maps to 376–445; it reads DYEKLSHLNS…FKLFKSVAVG (70 aa).

This sequence belongs to the ERT1/acuK family.

It localises to the nucleus. Transcription factor which regulates nonfermentable carbon utilization. This chain is Glucose starvation modulator protein 1 (GSM1), found in Meyerozyma guilliermondii (strain ATCC 6260 / CBS 566 / DSM 6381 / JCM 1539 / NBRC 10279 / NRRL Y-324) (Yeast).